The primary structure comprises 89 residues: Small ribosomal subunit protein uS15 (89 aa).

Belongs to the universal ribosomal protein uS15 family. Part of the 30S ribosomal subunit. Forms a bridge to the 50S subunit in the 70S ribosome, contacting the 23S rRNA.

In terms of biological role, one of the primary rRNA binding proteins, it binds directly to 16S rRNA where it helps nucleate assembly of the platform of the 30S subunit by binding and bridging several RNA helices of the 16S rRNA. Functionally, forms an intersubunit bridge (bridge B4) with the 23S rRNA of the 50S subunit in the ribosome. The chain is Small ribosomal subunit protein uS15 from Bradyrhizobium sp. (strain BTAi1 / ATCC BAA-1182).